We begin with the raw amino-acid sequence, 654 residues long: Threonine--tRNA ligase (654 aa).

Residues 1–63 (MAQISLTFPD…DADASIAIHT (63 aa)) form the TGS domain. Residues 247–544 (DHRKLGREMN…LIENFAGKLP (298 aa)) form a catalytic region. The Zn(2+) site is built by C344, H395, and H521.

Belongs to the class-II aminoacyl-tRNA synthetase family. In terms of assembly, homodimer. Requires Zn(2+) as cofactor.

Its subcellular location is the cytoplasm. The catalysed reaction is tRNA(Thr) + L-threonine + ATP = L-threonyl-tRNA(Thr) + AMP + diphosphate + H(+). Functionally, catalyzes the attachment of threonine to tRNA(Thr) in a two-step reaction: L-threonine is first activated by ATP to form Thr-AMP and then transferred to the acceptor end of tRNA(Thr). Also edits incorrectly charged L-seryl-tRNA(Thr). This Dinoroseobacter shibae (strain DSM 16493 / NCIMB 14021 / DFL 12) protein is Threonine--tRNA ligase.